A 301-amino-acid polypeptide reads, in one-letter code: Probable aspartoacylase (301 aa).

Zn(2+) contacts are provided by histidine 13 and glutamate 16. Substrate is bound by residues arginine 54 and 61-62 (NR). Histidine 105 is a Zn(2+) binding site. Substrate contacts are provided by glutamate 163 and tyrosine 273.

The protein belongs to the AspA/AstE family. Aspartoacylase subfamily. The cofactor is Zn(2+).

It carries out the reaction an N-acyl-L-aspartate + H2O = a carboxylate + L-aspartate. This chain is Probable aspartoacylase, found in Prochlorococcus marinus (strain AS9601).